A 1447-amino-acid polypeptide reads, in one-letter code: Regulator of G-protein signaling 12 (1447 aa).

The tract at residues 1–21 (MFRAGEASKRPLPGPSPPRVR) is disordered. The 77-residue stretch at 22–98 (SVEVARGRAG…GVLHMVIAEG (77 aa)) folds into the PDZ domain. Residues S172 and S195 each carry the phosphoserine modification. K196 is covalently cross-linked (Glycyl lysine isopeptide (Lys-Gly) (interchain with G-Cter in SUMO2)). In terms of domain architecture, PID spans 228–340 (VAMIVGYLGS…GALRTSCHVF (113 aa)). 2 disordered regions span residues 410 to 429 (ADAH…IGNF) and 443 to 482 (LGGS…DPEG). The segment covering 413 to 425 (HQNNSTSSNSDSG) has biased composition (polar residues). Gly residues predominate over residues 451-464 (GPGGSAWDGVGGRG). R524 and R633 each carry omega-N-methylarginine. The tract at residues 618 to 652 (NVRKTKEDKKGSKFGRGTGLTQPSQRTSARRSFGR) is disordered. A phosphoserine mark is found at S661 and S671. The RGS domain maps to 715 to 832 (SFERLLQDPV…LKSPLYQECI (118 aa)). The span at 843–853 (DSQQVPSSPAS) shows a compositional bias: polar residues. The disordered stretch occupies residues 843–941 (DSQQVPSSPA…RESQGSVSSA (99 aa)). Phosphoserine occurs at positions 850 and 879. A compositionally biased stretch (basic and acidic residues) spans 914–923 (EHGDHADDAL). S943 bears the Phosphoserine mark. 2 consecutive RBD domains span residues 962 to 1032 (KHCC…LEKR) and 1034 to 1104 (LFRL…LEEK). The span at 1103-1117 (EKDPSRGKASADKQK) shows a compositional bias: basic and acidic residues. The interval 1103–1169 (EKDPSRGKAS…RDPRLSKREE (67 aa)) is disordered. The span at 1122 to 1136 (KQNTAVNSSSRNHSA) shows a compositional bias: polar residues. The span at 1151-1169 (IKGENGKNARDPRLSKREE) shows a compositional bias: basic and acidic residues. A GoLoco domain is found at 1187-1209 (AEEFFELISKAQSNRADDQRGLL). Residues 1240-1447 (GFSKRSATGN…KTSAHHATFV (208 aa)) form a disordered region. Residues 1244-1258 (RSATGNGRESASQPG) show a composition bias toward polar residues. 2 stretches are compositionally biased toward low complexity: residues 1267–1280 (SSDS…SASS) and 1289–1298 (PPGQKSPSGP). Positions 1301-1313 (TPQSPVSLAQEGT) are enriched in polar residues.

Interacts with GNAI1. Interacts with GNAI2 and GNAI3; the interactions are GDP-dependent. As to expression, isoform 3 is brain specific.

It localises to the nucleus. The protein resides in the cytoplasm. The protein localises to the cell projection. It is found in the dendrite. Its subcellular location is the synapse. It localises to the nucleus matrix. Its function is as follows. Regulates G protein-coupled receptor signaling cascades. Inhibits signal transduction by increasing the GTPase activity of G protein alpha subunits, thereby driving them into their inactive GDP-bound form. Behaves as a cell cycle-dependent transcriptional repressor, promoting inhibition of S-phase DNA synthesis. The protein is Regulator of G-protein signaling 12 (RGS12) of Homo sapiens (Human).